Here is a 312-residue protein sequence, read N- to C-terminus: GTP cyclohydrolase MptA (312 aa).

Belongs to the GTP cyclohydrolase IV family. In terms of assembly, homodimer. Fe(2+) serves as cofactor.

The enzyme catalyses GTP + H2O = 7,8-dihydroneopterin 2',3'-cyclic phosphate + formate + diphosphate + H(+). Its pathway is cofactor biosynthesis; 5,6,7,8-tetrahydromethanopterin biosynthesis. In terms of biological role, converts GTP to 7,8-dihydro-D-neopterin 2',3'-cyclic phosphate, the first intermediate in the biosynthesis of coenzyme methanopterin. This is GTP cyclohydrolase MptA from Methanococcus vannielii (strain ATCC 35089 / DSM 1224 / JCM 13029 / OCM 148 / SB).